A 245-amino-acid chain; its full sequence is Eukaryotic translation initiation factor 6 (245 aa).

Belongs to the eIF-6 family. As to quaternary structure, monomer. Associates with the 60S ribosomal subunit.

It localises to the cytoplasm. The protein localises to the nucleus. It is found in the nucleolus. Binds to the 60S ribosomal subunit and prevents its association with the 40S ribosomal subunit to form the 80S initiation complex in the cytoplasm. May also be involved in ribosome biogenesis. The polypeptide is Eukaryotic translation initiation factor 6 (Tetrahymena thermophila (strain SB210)).